A 95-amino-acid chain; its full sequence is MSAADKKPLIPPSHITIKIKSQDDICVYFRIKRDVELRTMMQAYSDKVGQQMSAFRFHCDGIRIKPNQTPNELDLEDGDEIDAFVDQIAGFSHRH.

Residues 13–90 enclose the Ubiquitin-like domain; it reads SHITIKIKSQ…IDAFVDQIAG (78 aa). Residue Gly-90 forms a Glycyl lysine isopeptide (Gly-Lys) (interchain with K-? in acceptor proteins) linkage.

Belongs to the ubiquitin family. SUMO subfamily. Interacts with SAE2, SCE1, SIZ1 and MMS21 Covalently attached to a number of proteins.

Its subcellular location is the nucleus. It is found in the cytoplasm. Ubiquitin-like protein which can be covalently attached to target lysines as a monomer. Does not seem to be involved in protein degradation and may function as an antagonist of ubiquitin in the degradation process. In Arabidopsis thaliana (Mouse-ear cress), this protein is Putative small ubiquitin-related modifier 7 (SUMO7).